Consider the following 450-residue polypeptide: Flavin-containing monooxygenase FMO GS-OX-like 3 (450 aa).

17-22 provides a ligand contact to FAD; the sequence is GAGPAG. Residue 215–220 participates in NADP(+) binding; that stretch reads GNSSSA.

It belongs to the FMO family. The cofactor is FAD.

Functionally, catalyzes the conversion of methylthioalkyl glucosinolates of any chain length into methylsulfinylalkyl glucosinolates. This chain is Flavin-containing monooxygenase FMO GS-OX-like 3, found in Arabidopsis thaliana (Mouse-ear cress).